Consider the following 229-residue polypeptide: MSFLQDPSFFTMGMWSIGAGALGAAALALLLANTDVFLSKPQKAALEYLEDIDLKTLEKEPRTFKAKELWEKNGAVIMAVRRPGCFLCREEAADLSSLKSMLDQLGVPLYAVVKEHIRTEVKDFQPYFKGEIFLDEKKKFYGPQRRKMMFMGFIRLGVWYNFFRAWNGGFSGNLEGEGFILGGVFVVGSGKQGILLEHREKEFGDKVNLLSVLEAAKMIKPQTLASEKK.

The thioredoxin fold stretch occupies residues 14 to 112 (MWSIGAGALG…DQLGVPLYAV (99 aa)). Residues C85 and C88 each act as redox-active in the active site.

This sequence belongs to the peroxiredoxin-like PRXL2 family. PRXL2A subfamily. Expressed in CSF1 and TNFSF11-stimulated CD14(+) peripheral blood mononuclear cells (PBMCs).

It is found in the cytoplasm. It localises to the secreted. Functionally, involved in redox regulation of the cell. Acts as an antioxidant. Inhibits TNFSF11-induced NFKB1 and JUN activation and osteoclast differentiation. May affect bone resorption and help to maintain bone mass. Acts as a negative regulator of macrophage-mediated inflammation by inhibiting macrophage production of inflammatory cytokines, probably through suppression of the MAPK signaling pathway. The polypeptide is Peroxiredoxin-like 2A (Homo sapiens (Human)).